Here is a 379-residue protein sequence, read N- to C-terminus: Chaperone protein DnaJ (379 aa).

The J domain maps to 5-70 (DYYETLEVSQ…QKRAAYDQYG (66 aa)). The CR-type zinc-finger motif lies at 135 to 213 (GKSLEIKVPT…CRGQGRVEKT (79 aa)). Zn(2+) is bound by residues cysteine 148, cysteine 151, cysteine 165, cysteine 168, cysteine 187, cysteine 190, cysteine 201, and cysteine 204. CXXCXGXG motif repeat units follow at residues 148 to 155 (CEPCDGSG), 165 to 172 (CSTCHGHG), 187 to 194 (CPTCSGKG), and 201 to 208 (CTSCRGQG).

This sequence belongs to the DnaJ family. Homodimer. Zn(2+) is required as a cofactor.

It is found in the cytoplasm. Functionally, participates actively in the response to hyperosmotic and heat shock by preventing the aggregation of stress-denatured proteins and by disaggregating proteins, also in an autonomous, DnaK-independent fashion. Unfolded proteins bind initially to DnaJ; upon interaction with the DnaJ-bound protein, DnaK hydrolyzes its bound ATP, resulting in the formation of a stable complex. GrpE releases ADP from DnaK; ATP binding to DnaK triggers the release of the substrate protein, thus completing the reaction cycle. Several rounds of ATP-dependent interactions between DnaJ, DnaK and GrpE are required for fully efficient folding. Also involved, together with DnaK and GrpE, in the DNA replication of plasmids through activation of initiation proteins. The chain is Chaperone protein DnaJ from Colwellia maris.